Reading from the N-terminus, the 115-residue chain is Large ribosomal subunit protein bL19 (115 aa).

Belongs to the bacterial ribosomal protein bL19 family.

In terms of biological role, this protein is located at the 30S-50S ribosomal subunit interface and may play a role in the structure and function of the aminoacyl-tRNA binding site. This is Large ribosomal subunit protein bL19 from Pectobacterium carotovorum subsp. carotovorum (strain PC1).